Here is a 974-residue protein sequence, read N- to C-terminus: Phosphoenolpyruvate carboxylase 1 (974 aa).

Active-site residues include H164 and K604.

Belongs to the PEPCase type 1 family. In terms of assembly, exists as a homotetramer or heterooligomer. It depends on Mg(2+) as a cofactor.

It is found in the cytoplasm. The catalysed reaction is oxaloacetate + phosphate = phosphoenolpyruvate + hydrogencarbonate. With respect to regulation, activated by glutamine and dihydroxyacetone phosphate. Inhibited by glutamate, aspartate, 2-oxoglutarate and malate. In terms of biological role, through the carboxylation of phosphoenolpyruvate (PEP) it forms oxaloacetate, a four-carbon dicarboxylic acid source for the tricarboxylic acid cycle. The protein is Phosphoenolpyruvate carboxylase 1 of Chlamydomonas reinhardtii (Chlamydomonas smithii).